Here is a 348-residue protein sequence, read N- to C-terminus: Dihydroorotase (348 aa).

Residues His14 and His16 each coordinate Zn(2+). Substrate-binding positions include 16–18 (HLR) and Asn42. Residues Lys100, His137, and His175 each contribute to the Zn(2+) site. Lys100 is modified (N6-carboxylysine). His137 contributes to the substrate binding site. Leu220 lines the substrate pocket. Asp248 lines the Zn(2+) pocket. The active site involves Asp248. Substrate contacts are provided by His252 and Ala264.

Belongs to the metallo-dependent hydrolases superfamily. DHOase family. Class II DHOase subfamily. As to quaternary structure, homodimer. Requires Zn(2+) as cofactor.

The catalysed reaction is (S)-dihydroorotate + H2O = N-carbamoyl-L-aspartate + H(+). Its pathway is pyrimidine metabolism; UMP biosynthesis via de novo pathway; (S)-dihydroorotate from bicarbonate: step 3/3. Its function is as follows. Catalyzes the reversible cyclization of carbamoyl aspartate to dihydroorotate. This is Dihydroorotase from Synechococcus sp. (strain CC9605).